The primary structure comprises 467 residues: Glutamate--tRNA ligase (467 aa).

The 'HIGH' region motif lies at 10-20; sequence PSPTGYLHVGG. A 'KMSKS' region motif is present at residues 238–242; it reads RLSKR. Position 241 (K241) interacts with ATP.

Belongs to the class-I aminoacyl-tRNA synthetase family. Glutamate--tRNA ligase type 1 subfamily. In terms of assembly, monomer.

It is found in the cytoplasm. It carries out the reaction tRNA(Glu) + L-glutamate + ATP = L-glutamyl-tRNA(Glu) + AMP + diphosphate. In terms of biological role, catalyzes the attachment of glutamate to tRNA(Glu) in a two-step reaction: glutamate is first activated by ATP to form Glu-AMP and then transferred to the acceptor end of tRNA(Glu). The polypeptide is Glutamate--tRNA ligase (Citrifermentans bemidjiense (strain ATCC BAA-1014 / DSM 16622 / JCM 12645 / Bem) (Geobacter bemidjiensis)).